A 172-amino-acid polypeptide reads, in one-letter code: Adenine phosphoribosyltransferase (172 aa).

This sequence belongs to the purine/pyrimidine phosphoribosyltransferase family. Homodimer.

Its subcellular location is the cytoplasm. It carries out the reaction AMP + diphosphate = 5-phospho-alpha-D-ribose 1-diphosphate + adenine. The protein operates within purine metabolism; AMP biosynthesis via salvage pathway; AMP from adenine: step 1/1. Its function is as follows. Catalyzes a salvage reaction resulting in the formation of AMP, that is energically less costly than de novo synthesis. The polypeptide is Adenine phosphoribosyltransferase (Trichormus variabilis (strain ATCC 29413 / PCC 7937) (Anabaena variabilis)).